The sequence spans 952 residues: UvrABC system protein A (952 aa).

ATP is bound at residue 38-45 (GLSGSGKS). The C4-type zinc-finger motif lies at 259 to 286 (CDKCGFSISELEPRLFSFNSPLGSCSYC). ABC transporter domains follow at residues 316 to 595 (FKNI…SNSI) and 615 to 944 (GNGK…QYLS). 647–654 (GVSGSGKS) is a binding site for ATP. A C4-type zinc finger spans residues 746–772 (CDKCFGDGVIRIEMHFLPDVYVKCEVC).

It belongs to the ABC transporter superfamily. UvrA family. As to quaternary structure, forms a heterotetramer with UvrB during the search for lesions.

It is found in the cytoplasm. In terms of biological role, the UvrABC repair system catalyzes the recognition and processing of DNA lesions. UvrA is an ATPase and a DNA-binding protein. A damage recognition complex composed of 2 UvrA and 2 UvrB subunits scans DNA for abnormalities. When the presence of a lesion has been verified by UvrB, the UvrA molecules dissociate. In Mycoplasma genitalium (strain ATCC 33530 / DSM 19775 / NCTC 10195 / G37) (Mycoplasmoides genitalium), this protein is UvrABC system protein A.